The following is a 766-amino-acid chain: Serine/threonine-protein kinase B-raf (766 aa).

The segment covering 1 to 13 has biased composition (gly residues); the sequence is MAALSGGGGGGAE. The disordered stretch occupies residues 1–38; sequence MAALSGGGGGGAEPGQALFNGDMEPEAGAGAGAAASSA. Ala2 is subject to N-acetylalanine. Ser151 carries the phosphoserine modification. In terms of domain architecture, RBD spans 155 to 227; the sequence is PIVRVFLPNK…TGEELHVEVL (73 aa). The Phorbol-ester/DAG-type zinc finger occupies 234 to 280; it reads THNFVRKTFFTLAFCDFCRKLLFQGFRCQTCGYKFHQRCSTEVPLMC. Zn(2+) contacts are provided by His235, Cys248, Cys251, Cys261, Cys264, His269, Cys272, and Cys280. The segment at 308-454 is disordered; that stretch reads AETALTSGSS…DSSDDWEIPD (147 aa). Over residues 314–341 the composition is skewed to low complexity; sequence SGSSPSAPASDSIGPQILTSPSPSKSIP. Ser333 carries the post-translational modification Phosphoserine. The span at 348 to 363 shows a compositional bias: basic and acidic residues; that stretch reads PADEDHRNQFGQRDRS. Ser365 carries the phosphoserine; by SGK1 modification. Thr373 carries the post-translational modification Phosphothreonine; by autocatalysis. Thr396 bears the Phosphothreonine mark. Position 399 is a phosphoserine (Ser399). Phosphothreonine is present on Thr401. Residues 423 to 447 show a composition bias toward basic and acidic residues; the sequence is QRERKSSSSSEDRNRMKTLGRRDSS. Phosphoserine is present on residues Ser446 and Ser447. Residues 457–717 form the Protein kinase domain; sequence ITVGQRIGSG…PQILASIELL (261 aa). Residues 463-471 and Lys483 each bind ATP; that span reads IGSGSFGTV. Residue Asp576 is the Proton acceptor of the active site. Lys578 participates in a covalent cross-link: Glycyl lysine isopeptide (Lys-Gly) (interchain with G-Cter in ubiquitin). Residue Arg671 is modified to Omega-N-methylarginine; by PRMT5. Phosphoserine occurs at positions 729 and 750. At Thr753 the chain carries Phosphothreonine; by MAPK1.

The protein belongs to the protein kinase superfamily. TKL Ser/Thr protein kinase family. RAF subfamily. Monomer. Homodimer. Heterodimerizes with RAF1, and the heterodimer possesses a highly increased kinase activity compared to the respective homodimers or monomers. Heterodimerization is mitogen-regulated and enhanced by 14-3-3 proteins. MAPK1/ERK2 activation can induce a negative feedback that promotes the dissociation of the heterodimer by phosphorylating BRAF at Thr-753. Heterodimerizes (via N-terminus) with KSR1 (via N-terminus) or KSR2 (via N-terminus) in a MAP2K1-dependent manner. Interacts with MAP2K1 and MAP2K2. Found in a complex with at least BRAF, HRAS, MAP2K1, MAPK3 and RGS14. Interacts with RIT1. Interacts (via N-terminus) with RGS14 (via RBD domains); the interaction mediates the formation of a ternary complex with RAF1, a ternary complex inhibited by GNAI1. Interacts with DGKH. Interacts with PRMT5. Interacts with KSR2. Interacts with AKAP13, MAP2K1 and KSR1. Identified in a complex with AKAP13, MAP2K1 and KSR1. Interacts with FNIP1 and FNIP2. The cofactor is Zn(2+). In terms of processing, phosphorylation at Ser-365 by SGK1 inhibits its activity. Phosphorylation at Thr-753 by MAPK1. Dephosphorylation of Ser-365 by the SHOC2-MRAS-PP1c (SMP) complex consisting of SHOC2, GTP-bound M-Ras/MRAS and the catalytic subunit of protein phosphatase 1 (PPP1CA, PPP1CB or PPP1CC); this relieves inactivation and stimulates kinase activity. Post-translationally, methylation at Arg-671 decreases stability and kinase activity. Ubiquitinated by RNF149; which leads to proteasomal degradation. Polyubiquitinated at Lys-578 in response to EGF. In terms of tissue distribution, brain and testis.

Its subcellular location is the nucleus. The protein resides in the cytoplasm. It is found in the cell membrane. The catalysed reaction is L-seryl-[protein] + ATP = O-phospho-L-seryl-[protein] + ADP + H(+). It carries out the reaction L-threonyl-[protein] + ATP = O-phospho-L-threonyl-[protein] + ADP + H(+). In quiescent cells, maintained in an inactive state via an intramolecular interaction between the protein kinase and N-terminal domains. Following mitogen-mediated cell activation, binds via its RGB domain to active HRAS (GTP-bound) which releases the inhibitory intramolecular interaction between the two domains. This allows the MAP2K1-mediated dimerization of KSR1 or KSR2, and BRAF which activates BRAF. Its function is as follows. Protein kinase involved in the transduction of mitogenic signals from the cell membrane to the nucleus. Phosphorylates MAP2K1, and thereby activates the MAP kinase signal transduction pathway. Phosphorylates PFKFB2. May play a role in the postsynaptic responses of hippocampal neurons. In Homo sapiens (Human), this protein is Serine/threonine-protein kinase B-raf.